The sequence spans 359 residues: Elongation factor Ts 1, mitochondrial (359 aa).

Over residues 323–341 the composition is skewed to low complexity; it reads GKAAPAPKAEEPAAVAPAK. Positions 323–345 are disordered; it reads GKAAPAPKAEEPAAVAPAKADAE.

Belongs to the EF-Ts family.

It is found in the mitochondrion. Associates with the EF-Tu.GDP complex and induces the exchange of GDP to GTP. It remains bound to the aminoacyl-tRNA.EF-Tu.GTP complex up to the GTP hydrolysis stage on the ribosome. The sequence is that of Elongation factor Ts 1, mitochondrial from Thalassiosira pseudonana (Marine diatom).